Here is a 697-residue protein sequence, read N- to C-terminus: MSHSPNLSPQISNDIIDADTTSLASTETQQNIQHSQIHPIGHHGREQSEEPQNTTKTTTTTTNKIHTTTPSVDPDLGPLRELEQDLSSLESQQEQYLSQKPTSTSIKTNKVPLRERRGLLAQIVLIPEYEDARDYPNKIKYLIVFIIAFASLAGPFGTSVMLPAIDDIVNDLNTNVSTVNVSVGIYLLSLGIFPLWWSSFSERFGRRSVYMVSFTLFVAFSIGTALSPNIAALIVLRVLQGGSSASVQAVGAGTIADLFIPQERGQAMGLYYLGPLAGPFLAPILGGAVSQAWGWRATQWLLMIISACSFVLITFFLPETLRRVDTIQVAKDLMKKSDNNGSQNEKIHDDFAGADNSSVHDIDGNPIPGTELHQVVSNLSRRSSNARSIVTYMEEQENEGPIIDPVMPSISRLTTNRSAYSQRIHQNYVTDELRKTTSNLTQSNHSQYNNNNNNDNDKWSSVKTNCYDLIIRPLHSIILLKHPPVVLVISFSAISFAAIYFFNMAISYEYARSPYNFSSVILGLMYIPNSVTYFMASIIGGKWNDRLLNRYAQKHGELVPESRLSWNIVVAIILYPMACLIFGWTIKYREFWVIPLIGTALFGFASMLVIGATVTYLVDSLPGKGATGVALNNLIRQILAAIATFIVEPLLRAIGAGVLFSIIAGILLVSSLVLLYLKKRGAFFREHYDVMDLYAKL.

The Cytoplasmic portion of the chain corresponds to 1-141 (MSHSPNLSPQ…ARDYPNKIKY (141 aa)). The tract at residues 38–109 (HPIGHHGREQ…KPTSTSIKTN (72 aa)) is disordered. 2 stretches are compositionally biased toward low complexity: residues 53–69 (NTTK…HTTT) and 85–99 (DLSS…YLSQ). The helical transmembrane segment at 142–162 (LIVFIIAFASLAGPFGTSVML) threads the bilayer. The Extracellular segment spans residues 163–180 (PAIDDIVNDLNTNVSTVN). Asn-175 and Asn-180 each carry an N-linked (GlcNAc...) asparagine glycan. A helical transmembrane segment spans residues 181–201 (VSVGIYLLSLGIFPLWWSSFS). The Cytoplasmic segment spans residues 202–215 (ERFGRRSVYMVSFT). The chain crosses the membrane as a helical span at residues 216–236 (LFVAFSIGTALSPNIAALIVL). The Extracellular portion of the chain corresponds to 237–240 (RVLQ). A helical membrane pass occupies residues 241–261 (GGSSASVQAVGAGTIADLFIP). The Cytoplasmic portion of the chain corresponds to 262–268 (QERGQAM). The helical transmembrane segment at 269–289 (GLYYLGPLAGPFLAPILGGAV) threads the bilayer. The Extracellular segment spans residues 290 to 296 (SQAWGWR). The helical transmembrane segment at 297–317 (ATQWLLMIISACSFVLITFFL) threads the bilayer. Residues 318–485 (PETLRRVDTI…SIILLKHPPV (168 aa)) lie on the Cytoplasmic side of the membrane. The disordered stretch occupies residues 338–367 (DNNGSQNEKIHDDFAGADNSSVHDIDGNPI). A helical transmembrane segment spans residues 486–506 (VLVISFSAISFAAIYFFNMAI). At 507 to 519 (SYEYARSPYNFSS) the chain is on the extracellular side. N-linked (GlcNAc...) asparagine glycosylation occurs at Asn-516. The chain crosses the membrane as a helical span at residues 520 to 540 (VILGLMYIPNSVTYFMASIIG). The Cytoplasmic segment spans residues 541–565 (GKWNDRLLNRYAQKHGELVPESRLS). A helical membrane pass occupies residues 566-586 (WNIVVAIILYPMACLIFGWTI). Topologically, residues 587-590 (KYRE) are extracellular. The chain crosses the membrane as a helical span at residues 591-611 (FWVIPLIGTALFGFASMLVIG). The Cytoplasmic portion of the chain corresponds to 612–626 (ATVTYLVDSLPGKGA). The chain crosses the membrane as a helical span at residues 627–647 (TGVALNNLIRQILAAIATFIV). Topologically, residues 648-653 (EPLLRA) are extracellular. A helical membrane pass occupies residues 654 to 674 (IGAGVLFSIIAGILLVSSLVL). The Cytoplasmic portion of the chain corresponds to 675–697 (LYLKKRGAFFREHYDVMDLYAKL).

The protein belongs to the major facilitator superfamily. CAR1 family.

It is found in the cell membrane. MFS antiporter that does not display functional linkage as drug transporter and performs functions that significantly affect biofilm development and virulence. No substrate for transport has been identified yet, but plays an important role in the growth in the host. The protein is MFS antiporter QDR3 (QDR3) of Candida albicans (strain SC5314 / ATCC MYA-2876) (Yeast).